The primary structure comprises 209 residues: Ribulose-phosphate 3-epimerase (209 aa).

Ser8 is a substrate binding site. A divalent metal cation is bound by residues His33, Asp35, His64, and Asp170. The active-site Proton acceptor is Asp35. Substrate-binding positions include His64, 170-172, and 191-192; these read DGG and GS. The active-site Proton donor is Asp170.

Belongs to the ribulose-phosphate 3-epimerase family. The cofactor is a divalent metal cation.

The enzyme catalyses D-ribulose 5-phosphate = D-xylulose 5-phosphate. It functions in the pathway carbohydrate degradation. Functionally, catalyzes the reversible epimerization of D-ribulose 5-phosphate to D-xylulose 5-phosphate. This is Ribulose-phosphate 3-epimerase from Mycoplasma genitalium (strain ATCC 33530 / DSM 19775 / NCTC 10195 / G37) (Mycoplasmoides genitalium).